We begin with the raw amino-acid sequence, 305 residues long: Cytochrome c biogenesis protein CcsA (305 aa).

Transmembrane regions (helical) follow at residues 4–24, 32–52, 58–78, 91–111, 136–156, 212–232, 246–263, and 275–295; these read VLGL…LAFW, SGLV…QLVL, GHFP…ACTL, IVAA…SFAL, VIMV…AVLV, TITV…VWAN, TWAL…HTRL, and VASA…LLGI.

Belongs to the CcmF/CycK/Ccl1/NrfE/CcsA family. In terms of assembly, may interact with ccs1.

Its subcellular location is the cellular thylakoid membrane. In terms of biological role, required during biogenesis of c-type cytochromes (cytochrome c6 and cytochrome f) at the step of heme attachment. The protein is Cytochrome c biogenesis protein CcsA of Synechococcus sp. (strain CC9311).